Here is a 730-residue protein sequence, read N- to C-terminus: Elongation factor 2 (730 aa).

Residues 19 to 228 form the tr-type G domain; it reads QRIRNIGIVA…TGVSFKDVYD (210 aa). GTP-binding positions include 28–35, 94–98, and 148–151; these read AHIDHGKT, DTPGH, and NKVD. Histidine 596 is modified (diphthamide).

It belongs to the TRAFAC class translation factor GTPase superfamily. Classic translation factor GTPase family. EF-G/EF-2 subfamily.

It is found in the cytoplasm. In terms of biological role, catalyzes the GTP-dependent ribosomal translocation step during translation elongation. During this step, the ribosome changes from the pre-translocational (PRE) to the post-translocational (POST) state as the newly formed A-site-bound peptidyl-tRNA and P-site-bound deacylated tRNA move to the P and E sites, respectively. Catalyzes the coordinated movement of the two tRNA molecules, the mRNA and conformational changes in the ribosome. The protein is Elongation factor 2 of Methanosarcina acetivorans (strain ATCC 35395 / DSM 2834 / JCM 12185 / C2A).